The primary structure comprises 391 residues: Probable chaperonin-like protein PrmG (391 aa).

The tract at residues 153–191 is disordered; that stretch reads TTRWSVRSSPPPSNTSARTASSPPRRATHSGCRSRSSTA. Positions 154 to 174 are enriched in polar residues; it reads TRWSVRSSPPPSNTSARTASS.

Belongs to the chaperonin (HSP60) family.

Probably plays an essential role in the productive folding of PrmA and PrmC, and thus in the formation of the active PrmABCD complex. The protein is Probable chaperonin-like protein PrmG of Gordonia sp. (strain TY-5).